We begin with the raw amino-acid sequence, 252 residues long: tRNA1(Val) (adenine(37)-N6)-methyltransferase (252 aa).

This sequence belongs to the methyltransferase superfamily. tRNA (adenine-N(6)-)-methyltransferase family.

Its subcellular location is the cytoplasm. The enzyme catalyses adenosine(37) in tRNA1(Val) + S-adenosyl-L-methionine = N(6)-methyladenosine(37) in tRNA1(Val) + S-adenosyl-L-homocysteine + H(+). Its function is as follows. Specifically methylates the adenine in position 37 of tRNA(1)(Val) (anticodon cmo5UAC). This Yersinia pseudotuberculosis serotype IB (strain PB1/+) protein is tRNA1(Val) (adenine(37)-N6)-methyltransferase.